Reading from the N-terminus, the 383-residue chain is MGVKASQTGFVVLVLLQCCSAYKLVCYYTSWSQYREGDGSCFPDALDRFLCTHIIYSFANISNDHIDTWEWNDVTLYGMLNTLKNRNPNLKTLLSVGGWNFGSQRFSKIASNTQSRRTFIKSVPPFLRTHGFDGLDLAWLYPGRRDKQHFTTLIKEMKAEFIKEAQPGKKQLLLSAALSAGKVTIDSSYDIAKISQHLDFISIMTYDFHGAWRGTTGHHSPLFRGQEDASPDRFSNTDYAVGYMLRLGAPASKLVMGIPTFGRSFTLASSETGVGAPISGPGIPGRFTKEAGTLAYYEICDFLRGATVHRILGQQVPYATKGNQWVGYDDQESVKSKVQYLKDRQLAGAMVWALDLDDFQGSFCGQDLRFPLTNAIKDALAAT.

Residues 1–21 (MGVKASQTGFVVLVLLQCCSA) form the signal peptide. In terms of domain architecture, GH18 spans 22-383 (YKLVCYYTSW…NAIKDALAAT (362 aa)). Cysteine 26 and cysteine 51 are disulfide-bonded. N-linked (GlcNAc...) asparagine glycosylation is present at asparagine 60. Residues 70–71 (EW), 97–100 (GGWN), tyrosine 141, 204–207 (MTYD), and arginine 263 each bind chitin. A disulfide bridge links cysteine 300 with cysteine 364. The tract at residues 324–338 (QWVGYDDQESVKSKV) is important for AKT1 activation and IL8 production. A chitin-binding site is contributed by tryptophan 352.

It belongs to the glycosyl hydrolase 18 family. In terms of assembly, monomer. Glycosylated. Present in activated macrophages, articular chondrocytes, synovial cells as well as in liver. Very low or undetectable expression in non-inflammatory colon. Undetectable in muscle tissues, lung, pancreas, mononuclear cells, or fibroblasts.

It localises to the secreted. It is found in the extracellular space. The protein localises to the cytoplasm. Its subcellular location is the perinuclear region. The protein resides in the endoplasmic reticulum. Carbohydrate-binding lectin with a preference for chitin. Has no chitinase activity. May play a role in tissue remodeling and in the capacity of cells to respond to and cope with changes in their environment. Plays a role in T-helper cell type 2 (Th2) inflammatory response and IL-13-induced inflammation, regulating allergen sensitization, inflammatory cell apoptosis, dendritic cell accumulation and M2 macrophage differentiation. Facilitates invasion of pathogenic enteric bacteria into colonic mucosa and lymphoid organs. Mediates activation of AKT1 signaling pathway and subsequent IL8 production in colonic epithelial cells. Regulates antibacterial responses in lung by contributing to macrophage bacterial killing, controlling bacterial dissemination and augmenting host tolerance. Also regulates hyperoxia-induced injury, inflammation and epithelial apoptosis in lung. The polypeptide is Chitinase-3-like protein 1 (CHI3L1) (Homo sapiens (Human)).